A 657-amino-acid chain; its full sequence is Wall-associated receptor kinase-like 20 (657 aa).

Positions 1 to 23 are cleaved as a signal peptide; it reads MEKKRSYYALLIPTLLTVWLACA. The Extracellular segment spans residues 24-293; that stretch reads GHSCARHAKA…KHCKKKKKTV (270 aa). The N-linked (GlcNAc...) asparagine glycan is linked to asparagine 140. The chain crosses the membrane as a helical span at residues 294-314; sequence VFAGAAVAVVGVTLAIAVAVI. Over 315-657 the chain is Cytoplasmic; that stretch reads GTKHSHQKVK…NILSQEVTET (343 aa). A Protein kinase domain is found at 363–646; it reads FSKDNLIGTG…KEVADEIEYI (284 aa). Residues 369–377 and lysine 391 each bind ATP; that span reads IGTGGFGEV. Residue aspartate 490 is the Proton acceptor of the active site.

Belongs to the protein kinase superfamily. Ser/Thr protein kinase family.

The protein localises to the membrane. The catalysed reaction is L-seryl-[protein] + ATP = O-phospho-L-seryl-[protein] + ADP + H(+). It carries out the reaction L-threonyl-[protein] + ATP = O-phospho-L-threonyl-[protein] + ADP + H(+). Functionally, serine/threonine-protein kinase that may function as a signaling receptor of extracellular matrix component. The polypeptide is Wall-associated receptor kinase-like 20 (WAKL20) (Arabidopsis thaliana (Mouse-ear cress)).